A 56-amino-acid chain; its full sequence is Large ribosomal subunit protein bL32 (56 aa).

The segment covering 1 to 16 has biased composition (basic residues); that stretch reads MAVQKNRKTRSKRGMR. Residues 1–28 are disordered; that stretch reads MAVQKNRKTRSKRGMRRSHDALTTAALS.

The protein belongs to the bacterial ribosomal protein bL32 family.

This Vibrio campbellii (strain ATCC BAA-1116) protein is Large ribosomal subunit protein bL32.